A 489-amino-acid polypeptide reads, in one-letter code: Blue-light-activated histidine kinase (489 aa).

The PAS domain maps to 19–93; the sequence is ATDPFRAAVE…AIKSAIAAEK (75 aa). Residue cysteine 69 is modified to S-4a-FMN cysteine. PAC domains follow at residues 93–147 and 232–281; these read KPID…ELEK and YSIE…NKAL. Positions 259 to 341 are HWE histidine kinase domain; that stretch reads NPLVLGIVQD…LLKENWAGAT (83 aa). A Phosphohistidine; by autocatalysis modification is found at histidine 288.

FMN binds covalently to cysteine after exposure to blue light and this bond is spontaneously broken in the dark.

It carries out the reaction ATP + protein L-histidine = ADP + protein N-phospho-L-histidine.. Functionally, photosensitive kinase that is involved in increased bacterial virulence upon exposure to light. Once ejected from an infected animal host, sunlight acts as an environmental signal that increases the virulence of the bacterium, preparing it for infection of the next host. This photoreceptor protein is directly related to the bacterium's survival and replication within host macrophages. This Brucella ovis (strain ATCC 25840 / 63/290 / NCTC 10512) protein is Blue-light-activated histidine kinase.